The primary structure comprises 94 residues: uncharacterized protein (94 aa).

Positions 1–19 are cleaved as a signal peptide; that stretch reads MKFSGLILGALALVSGAIA.

It belongs to the protease inhibitor I9 family.

This is an uncharacterized protein from Neurospora crassa (strain ATCC 24698 / 74-OR23-1A / CBS 708.71 / DSM 1257 / FGSC 987).